Consider the following 764-residue polypeptide: Subtilisin-like protease SBT1.6 (764 aa).

The N-terminal stretch at 1 to 20 (MASSTIVLLLFLSFPFISFA) is a signal peptide. Residues 46-99 (HWYSTEFAEESRIVHVYHTVFHGFSAVVTPDEADNLRNHPAVLAVFEDRRRELH) enclose the Inhibitor I9 domain. In terms of domain architecture, Peptidase S8 spans 103–606 (SPQFLGLQNQ…SGHLNLGRAM (504 aa)). Asp-131 (charge relay system) is an active-site residue. Asn-191 carries an N-linked (GlcNAc...) asparagine glycan. The Charge relay system role is filled by His-205. The 81-residue stretch at 377-457 (SSASLCMENT…NEGDRIKAYA (81 aa)) folds into the PA domain. Catalysis depends on Ser-538, which acts as the Charge relay system. Asn-578 carries N-linked (GlcNAc...) asparagine glycosylation.

The protein belongs to the peptidase S8 family. Expressed in roots, leaves and flowers of mature plants.

The protein is Subtilisin-like protease SBT1.6 of Arabidopsis thaliana (Mouse-ear cress).